The primary structure comprises 390 residues: Chitinase-3-like protein 2 (390 aa).

The first 26 residues, 1–26 (MGATTMDQKSLWAGVVVLLLLQGGSA), serve as a signal peptide directing secretion. One can recognise a GH18 domain in the interval 27 to 390 (YKLVCYFTNW…QAVKRSLGSL (364 aa)). A disulfide bridge connects residues cysteine 31 and cysteine 56. N-linked (GlcNAc...) asparagine glycosylation is present at asparagine 35. Chitin-binding positions include 75–76 (DK), 102–105 (GGYL), tyrosine 104, tyrosine 146, 210–213 (LSFD), aspartate 213, and tryptophan 360.

It belongs to the glycosyl hydrolase 18 family. Highest expression in chondrocytes, followed by synoviocytes, lung and heart. Not detected in spleen, pancreas, and liver. May also be expressed in developing brain and placenta.

The protein localises to the secreted. Lectin that binds chitooligosaccharides and other glycans with high affinity, but not heparin. Has no chitinase activity. In Homo sapiens (Human), this protein is Chitinase-3-like protein 2 (CHI3L2).